The primary structure comprises 159 residues: Cyclic pyranopterin monophosphate synthase (159 aa).

Residues 75–77 (LCH) and 113–114 (ME) contribute to the substrate site. Residue Asp-128 is part of the active site.

It belongs to the MoaC family. As to quaternary structure, homohexamer; trimer of dimers.

The catalysed reaction is (8S)-3',8-cyclo-7,8-dihydroguanosine 5'-triphosphate = cyclic pyranopterin phosphate + diphosphate. It functions in the pathway cofactor biosynthesis; molybdopterin biosynthesis. Functionally, catalyzes the conversion of (8S)-3',8-cyclo-7,8-dihydroguanosine 5'-triphosphate to cyclic pyranopterin monophosphate (cPMP). The sequence is that of Cyclic pyranopterin monophosphate synthase from Yersinia pseudotuberculosis serotype IB (strain PB1/+).